A 113-amino-acid polypeptide reads, in one-letter code: Endoribonuclease SymE (113 aa).

The SpoVT-AbrB domain maps to 29–74 (SRYPDYSRIPAITLKGQWLEAAGFATGTAIDVKVMEGCIVLTAQPP).

Belongs to the SymE family.

The protein localises to the cytoplasm. Its function is as follows. Involved in the degradation and recycling of damaged RNA. It is itself a target for degradation by the ATP-dependent protease Lon. This chain is Endoribonuclease SymE, found in Escherichia coli O1:K1 / APEC.